Here is a 312-residue protein sequence, read N- to C-terminus: Ribosomal protein L11 methyltransferase (312 aa).

S-adenosyl-L-methionine-binding residues include Thr160, Gly181, Asp203, and Asn246.

This sequence belongs to the methyltransferase superfamily. PrmA family.

It localises to the cytoplasm. The catalysed reaction is L-lysyl-[protein] + 3 S-adenosyl-L-methionine = N(6),N(6),N(6)-trimethyl-L-lysyl-[protein] + 3 S-adenosyl-L-homocysteine + 3 H(+). In terms of biological role, methylates ribosomal protein L11. In Staphylococcus epidermidis (strain ATCC 12228 / FDA PCI 1200), this protein is Ribosomal protein L11 methyltransferase.